The sequence spans 140 residues: Nucleoside diphosphate kinase (140 aa).

ATP contacts are provided by K11, F59, R87, T93, R104, and N114. H117 (pros-phosphohistidine intermediate) is an active-site residue.

It belongs to the NDK family. It depends on Mg(2+) as a cofactor.

The protein localises to the cytoplasm. The enzyme catalyses a 2'-deoxyribonucleoside 5'-diphosphate + ATP = a 2'-deoxyribonucleoside 5'-triphosphate + ADP. It catalyses the reaction a ribonucleoside 5'-diphosphate + ATP = a ribonucleoside 5'-triphosphate + ADP. Major role in the synthesis of nucleoside triphosphates other than ATP. The ATP gamma phosphate is transferred to the NDP beta phosphate via a ping-pong mechanism, using a phosphorylated active-site intermediate. The sequence is that of Nucleoside diphosphate kinase from Metallosphaera sedula (strain ATCC 51363 / DSM 5348 / JCM 9185 / NBRC 15509 / TH2).